We begin with the raw amino-acid sequence, 78 residues long: Small ribosomal subunit protein eS21 (78 aa).

It belongs to the eukaryotic ribosomal protein eS21 family.

The protein is Small ribosomal subunit protein eS21 (rps21) of Dictyostelium discoideum (Social amoeba).